A 370-amino-acid polypeptide reads, in one-letter code: Cytochrome b (370 aa).

A run of 4 helical transmembrane segments spans residues 25-45 (FGSM…FLAI), 69-90 (WIMQ…YIHI), 105-125 (WLSG…GYVL), and 170-190 (FFAL…IHII). Residues His-75 and His-89 each coordinate heme b. 2 residues coordinate heme b: His-174 and His-188. A ubiquinone is bound at residue His-193. 4 consecutive transmembrane segments (helical) span residues 218 to 238 (YKDM…MSFT), 280 to 300 (LGGT…PFTH), 312 to 332 (LTQI…WTAT), and 339 to 358 (FISI…IINP).

It belongs to the cytochrome b family. The cytochrome bc1 complex contains 3 respiratory subunits (MT-CYB, CYC1 and UQCRFS1), 2 core proteins (UQCRC1 and UQCRC2) and probably 6 low-molecular weight proteins. The cofactor is heme b.

The protein localises to the mitochondrion inner membrane. Functionally, component of the ubiquinol-cytochrome c reductase complex (complex III or cytochrome b-c1 complex) that is part of the mitochondrial respiratory chain. The b-c1 complex mediates electron transfer from ubiquinol to cytochrome c. Contributes to the generation of a proton gradient across the mitochondrial membrane that is then used for ATP synthesis. The sequence is that of Cytochrome b (MT-CYB) from Bungarus fasciatus (Banded krait).